The primary structure comprises 253 residues: CD151 antigen (253 aa).

The Cytoplasmic portion of the chain corresponds to 1-18 (MGEFNEKKTTCGTVCLKY). Residues cysteine 11 and cysteine 15 are each lipidated (S-palmitoyl cysteine). The helical transmembrane segment at 19 to 39 (LLFTYNCCFWLAGLAVMAVGI) threads the bilayer. Residues 40–57 (WTLALKSDYISLLASGTY) are Extracellular-facing. A helical transmembrane segment spans residues 58-78 (LATAYILVVAGTVVMVTGVLG). At 79–91 (CCATFKERRNLLR) the chain is on the cytoplasmic side. Residues 92-112 (LYFILLLIIFLLEIIAGILAY) form a helical membrane-spanning segment. The Extracellular portion of the chain corresponds to 113–221 (AYYQQLNTEL…LETFIQEHLR (109 aa)). A glycan (N-linked (GlcNAc...) asparagine) is linked at asparagine 159. A helical membrane pass occupies residues 222–242 (VIGAVGIGIACVQVFGMIFTC). Residues cysteine 242 and cysteine 243 are each lipidated (S-palmitoyl cysteine). At 243-253 (CLYRSLKLEHY) the chain is on the cytoplasmic side.

It belongs to the tetraspanin (TM4SF) family. As to quaternary structure, interacts with integrins ITGA3:ITGB1, ITGA5:ITGB1, ITGA3:ITGB1 and ITGA6:ITGB4 and with CD9 and CD181. Interacts (via the second extracellular domain) with integrin ITGAV:ITGB3. Interacts with ITGA3; this interaction modulates ITGA3 glycosylation pattern. Interacts with F11R. Interacts with RAC1 and CDC42; these interactions mediate physical association of RAC1 and CDC42 with integrin adhesion receptor complexes. Palmitoylated. Palmitoylation by ZDHHC2 regulates CD151 expression, association with other tetraspanin family proteins and function in cell adhesion. In terms of processing, ubiquitinated by RNF128 on lysine residues present in the tetraspanin amino terminus via 'Lys-48'-linked ubiquitin leading to proteasomal degradation. As to expression, expressed in a variety of tissues including vascular endothelium and epidermis. Expressed on erythroid cells, with a higher level of expression in erythroid precursors than on mature erythrocytes. Acts as a sensitive T-cell activation marker.

The protein localises to the cell membrane. Structural component of specialized membrane microdomains known as tetraspanin-enriched microdomains (TERMs), which act as platforms for receptor clustering and signaling. Plays a role in various cellular and molecular mechanism through its association with both integrin and non-integrin proteins. These interactions facilitate critical cellular functions, including cell-to-cell communication, wound healing, platelet aggregation, trafficking, cell motility, and angiogenesis. Via interaction with JAM-A/F11R and integrin ITGA3:ITGB1, promotes the recruitment of signaling molecules such as RAC1, CDC42 and RhoGTPases to facilitate the polarization of epithelial cells and the reorganization of the actin cytoskeleton, which are critical steps in cell migration process. Regulates the glycosylation pattern of ITGA3:ITGB1 thereby modulating its activity. Plays an essential role in the maintenance of central laminin-binding integrin ITGA6:ITGB4-containing adhesion complexes. Essential for the proper assembly of the glomerular and tubular basement membranes in kidney. Contributes to T-cell activation by modulating integrin signaling leading to activation of downstream targets PTK2 and MAPK1/MAPK3. Functionally, (Microbial infection) Plays a role in human papillomavirus 16/HPV-16 endocytosis upon binding to cell surface receptor. Its function is as follows. (Microbial infection) Plays a role in human cytomegalovirus entry into host cell by contributing to entry receptor binding, membrane fusion, or release of the capsid. The chain is CD151 antigen (CD151) from Homo sapiens (Human).